A 404-amino-acid chain; its full sequence is Acyl-[acyl-carrier-protein] desaturase 7, chloroplastic (404 aa).

A chloroplast-targeting transit peptide spans 1-39 (MAASATTSTLAVTMFGYPNRNCHLKPPATATLRFWRSAA). 6 residues coordinate Fe cation: E138, E176, H179, E229, E262, and H265.

The protein belongs to the fatty acid desaturase type 2 family. Homodimer. The cofactor is Fe(2+).

It localises to the plastid. The protein localises to the chloroplast. It functions in the pathway lipid metabolism; fatty acid metabolism. In terms of biological role, introduces a cis double bond in the acyl chain of an acyl-[acyl-carrier protein]. The protein is Acyl-[acyl-carrier-protein] desaturase 7, chloroplastic of Oryza sativa subsp. indica (Rice).